We begin with the raw amino-acid sequence, 461 residues long: Steroidogenic factor 1 (461 aa).

The segment at residues 10–85 (DELCPVCGDK…VGMRLEAVRA (76 aa)) is a DNA-binding region (nuclear receptor). The NR C4-type zinc finger occupies 13–33 (CPVCGDKVSGYHYGLLTCESC). Residues Lys-34, Lys-38, and Lys-72 each carry the N6-acetyllysine modification. The NR C4-type zinc-finger motif lies at 49–73 (CTESQSCKIDKTLRKRCPFCRFQKC). A Glycyl lysine isopeptide (Lys-Gly) (interchain with G-Cter in SUMO) cross-link involves residue Lys-119. The tract at residues 119–153 (KLETGPPMGVPPPPPPPPDYMLPPGLHVPEPKGLA) is disordered. Residues 126–139 (MGVPPPPPPPPDYM) show a composition bias toward pro residues. Residue Lys-194 forms a Glycyl lysine isopeptide (Lys-Gly) (interchain with G-Cter in SUMO) linkage. At Ser-203 the chain carries Phosphoserine; by CDK7. The NR LBD domain maps to 222-459 (GVPELILQLL…NLLIEMLQAK (238 aa)). A 1,2-diacyl-sn-glycero-3-phosphocholine is bound by residues Gly-341, Tyr-436, and Lys-440.

This sequence belongs to the nuclear hormone receptor family. NR5 subfamily. As to quaternary structure, binds DNA as a monomer. Part of a complex consisting of SFPQ, NONO and NR5A1. Interacts with NR0B2. Interacts with DGKQ and CDK7. Binds to and activated by HIPK3. In terms of processing, acetylation stimulates the transcriptional activity. Sumoylation reduces CDK7-mediated phosphorylation on Ser-203. Post-translationally, phosphorylated on Ser-203 by CDK7. This phosphorylation promotes transcriptional activity.

It localises to the nucleus. Transcriptional activator. Seems to be essential for sexual differentiation and formation of the primary steroidogenic tissues. Binds to the Ad4 site found in the promoter region of steroidogenic P450 genes such as CYP11A, CYP11B and CYP21B. Also regulates the AMH/Muellerian inhibiting substance gene as well as the AHCH and STAR genes. 5'-YCAAGGYC-3' and 5'-RRAGGTCA-3' are the consensus sequences for the recognition by NR5A1. The SFPQ-NONO-NR5A1 complex binds to the CYP17 promoter and regulates basal and cAMP-dependent transcriptional activity. Binds phospholipids with a phosphatidylinositol (PI) headgroup, in particular PI(3,4)P2 and PI(3,4,5)P3. Activated by the phosphorylation of NR5A1 by HIPK3 leading to increased steroidogenic gene expression upon cAMP signaling pathway stimulation. The sequence is that of Steroidogenic factor 1 (NR5A1) from Equus caballus (Horse).